The sequence spans 465 residues: Cruciform DNA-recognizing protein 1 (465 aa).

Disordered stretches follow at residues 107-227 and 247-276; these read EAGG…VPNP and RLNKKEEVPEPVAGPIVESSVTEKSPALPQ. Residues 127 to 151 show a composition bias toward basic residues; sequence NRKKNKRNNKKRRSKLKKKSTKNNK. Residues Ser-153 and Ser-156 each carry the phosphoserine modification. Acidic residues predominate over residues 156–165; it reads SLDDNEEEDG. Residues 160-161 are X-DNA-binding; it reads NE. Residues 166 to 177 show a composition bias toward low complexity; it reads VTGTTTEDVTGT. Thr-182 carries the phosphothreonine modification. Ser-271 is subject to Phosphoserine. Position 295 is a phosphothreonine (Thr-295). The disordered stretch occupies residues 300 to 465; sequence AVTPLINEPE…FFGKLKKLFK (166 aa). 2 positions are modified to phosphoserine: Ser-319 and Ser-343. Over residues 337 to 363 the composition is skewed to basic and acidic residues; that stretch reads LVEKRESTEGVLDGSKKVENKAKKDEE. At Thr-366 the chain carries Phosphothreonine. Basic and acidic residues-rich tracts occupy residues 385-398 and 404-428; these read AEGRKSPAVSEEKE and EKGSKEVKRSETSKEKKPSAKEVKK. Ser-394 is modified (phosphoserine). Ser-440 carries the phosphoserine modification. The span at 451–465 shows a compositional bias: basic residues; the sequence is KKKTGFFGKLKKLFK.

The protein belongs to the CRP1/MDG1 family. In terms of processing, cleaved in the vicinity of position 160 to give an X-DNA-binding N-terminal subpeptide and a non-DNA-binding C-terminal subpeptide.

In terms of biological role, cruciform DNA-binding protein which exerts an enhancing effect on the cleavage of cruciform DNA (X-DNA) by endonuclease VII from bacteriophage T4. In Saccharomyces cerevisiae (strain ATCC 204508 / S288c) (Baker's yeast), this protein is Cruciform DNA-recognizing protein 1 (CRP1).